Here is a 348-residue protein sequence, read N- to C-terminus: MFLGPLMLDIAGTTLTETDRVQLSHPLVGGVILFARNYESPAQLSELTASIHALRSPPLLIAVDQEGGRVQRFRDGFTRLPPMRTLGEIQDRNPDLSLHLARQIGYVLAAELKACGVDVSFTPVLDLDCEQSSVIGDRAFYREPQVVAELAHALMSGLQSVGMVAVGKHFPGHGAIQADTHVETAIDSRNYTDIEKKDLTPFRRMIDTGLSGIMAAHVIYPAIDPNPAGFSSKWLQDILRNELGFRGCIFSDDLCMQAARNYGSITHRAEQALQAGCNMVLICNDPDSADELLTSLQWEFSAVDTARLEHMRGQQTVHSMAQLHEMERFIRATEEISRISLANISVSV.

Substrate is bound by residues Asp64, Arg72, Arg138, and Lys168–His169. The active-site Proton donor/acceptor is His181. The active-site Nucleophile is the Asp252.

This sequence belongs to the glycosyl hydrolase 3 family. NagZ subfamily.

Its subcellular location is the cytoplasm. It catalyses the reaction Hydrolysis of terminal non-reducing N-acetyl-D-hexosamine residues in N-acetyl-beta-D-hexosaminides.. The protein operates within cell wall biogenesis; peptidoglycan recycling. Plays a role in peptidoglycan recycling by cleaving the terminal beta-1,4-linked N-acetylglucosamine (GlcNAc) from peptide-linked peptidoglycan fragments, giving rise to free GlcNAc, anhydro-N-acetylmuramic acid and anhydro-N-acetylmuramic acid-linked peptides. This Nitrosomonas eutropha (strain DSM 101675 / C91 / Nm57) protein is Beta-hexosaminidase.